The following is a 215-amino-acid chain: UPF0502 protein Shal_1801 (215 aa).

Belongs to the UPF0502 family.

The chain is UPF0502 protein Shal_1801 from Shewanella halifaxensis (strain HAW-EB4).